We begin with the raw amino-acid sequence, 188 residues long: Apolipoprotein M (188 aa).

The segment at residues methionine 1 to glutamine 22 is a signal peptide (not cleaved). 3 disulfide bridges follow: cysteine 23–cysteine 167, cysteine 95–cysteine 183, and cysteine 128–cysteine 157. The tetradecanoate site is built by glutamate 136 and arginine 143.

It belongs to the calycin superfamily. Lipocalin family. Highly divergent. In terms of assembly, interacts with LRP2; LRP2 mediates APOM renal uptake and subsequent lysosomal degradation.

Its subcellular location is the secreted. Functionally, probably involved in lipid transport. Can bind sphingosine-1-phosphate, myristic acid, palmitic acid and stearic acid, retinol, all-trans-retinoic acid and 9-cis-retinoic acid. In Sus scrofa (Pig), this protein is Apolipoprotein M (APOM).